A 471-amino-acid polypeptide reads, in one-letter code: Trimethyllysine dioxygenase (471 aa).

Fe cation contacts are provided by H251 and D253. Positions 272-302 (KAAPSRPPPPPPPPPPPSEEKEAAGSAAGEA) are disordered. The segment covering 276–288 (SRPPPPPPPPPPP) has biased composition (pro residues). Position 430 (H430) interacts with Fe cation.

It belongs to the gamma-BBH/TMLD family. Requires Fe(2+) as cofactor. L-ascorbate is required as a cofactor.

The protein resides in the cytoplasm. It catalyses the reaction N(6),N(6),N(6)-trimethyl-L-lysine + 2-oxoglutarate + O2 = (3S)-3-hydroxy-N(6),N(6),N(6)-trimethyl-L-lysine + succinate + CO2. The protein operates within amine and polyamine biosynthesis; carnitine biosynthesis. In terms of biological role, converts trimethyllysine (TML) into hydroxytrimethyllysine (HTML). In Neurospora crassa (strain ATCC 24698 / 74-OR23-1A / CBS 708.71 / DSM 1257 / FGSC 987), this protein is Trimethyllysine dioxygenase (cbs-1).